We begin with the raw amino-acid sequence, 312 residues long: ECF RNA polymerase sigma factor SigJ (312 aa).

The segment at 6–65 is sigma-70 factor domain-2; sequence FEALRQHLMSVAYRLTGTVADAEDIVQEAWLRWDSPDTVIADPRAWLTTVVSRLGLDKLR. The Polymerase core binding motif lies at 29 to 32; sequence DIVQ. The tract at residues 107 to 155 is sigma-70 factor domain-4; it reads MVVLERLRPDQRVAFVLHDGFAVPFAEVAEVLGTSEAAARQLASRARKA. The segment at residues 131–150 is a DNA-binding region (H-T-H motif); sequence FAEVAEVLGTSEAAARQLAS. The interval 293–312 is disordered; sequence GSPLKERRAQPTGRGRHHRN.

Belongs to the sigma-70 factor family. ECF subfamily. As to quaternary structure, interacts transiently with the RNA polymerase catalytic core formed by RpoA, RpoB, RpoC and RpoZ (2 alpha, 1 beta, 1 beta' and 1 omega subunit) to form the RNA polymerase holoenzyme that can initiate transcription.

Its function is as follows. Sigma factors are initiation factors that promote the attachment of RNA polymerase to specific initiation sites and are then released. Extracytoplasmic function (ECF) sigma factors are held in an inactive form by an anti-sigma factor until released, although no anti-sigma factor is known for this protein. Regulates the promoter of SigI, may not be autoregulated. This chain is ECF RNA polymerase sigma factor SigJ (sigJ), found in Mycobacterium tuberculosis (strain ATCC 25618 / H37Rv).